The primary structure comprises 150 residues: Regulatory protein RecX (150 aa).

It belongs to the RecX family.

The protein resides in the cytoplasm. In terms of biological role, modulates RecA activity. This Ectopseudomonas mendocina (strain ymp) (Pseudomonas mendocina) protein is Regulatory protein RecX.